The chain runs to 92 residues: Bombyxin A-3 (92 aa).

A signal peptide spans 1 to 19; sequence MKILLAIALMLSTVMWVST. The residue at position 20 (Q20) is a Pyrrolidone carboxylic acid. Intrachain disulfides connect C29–C79, C41–C92, and C78–C83. A propeptide spans 50 to 70 (c peptide like); the sequence is SDAQYVSYGSAWLMPYSEGRG.

It belongs to the insulin family. Heterodimer of a B chain and an A chain linked by two disulfide bonds.

The protein resides in the secreted. Brain peptide responsible for activation of prothoracic glands to produce ecdysone in insects. The chain is Bombyxin A-3 (BBXA3) from Bombyx mori (Silk moth).